A 124-amino-acid chain; its full sequence is MLNTLVVFLGAGLGGALRYGVNVSAARLGGSFPAATMIINVSGSLAMGILAGWFVVRAGLPQSLRLFLTTGILGGFTTFSTFSLEAFLLIERGALAQAVLYVIGSVAAGIAGVAVSFAIIRHFG.

4 helical membrane passes run 1 to 21 (MLNT…RYGV), 36 to 56 (TMII…WFVV), 70 to 90 (TGIL…FLLI), and 100 to 120 (LYVI…FAII). 2 residues coordinate Na(+): Gly-74 and Thr-77.

The protein belongs to the fluoride channel Fluc/FEX (TC 1.A.43) family.

Its subcellular location is the cell inner membrane. It catalyses the reaction fluoride(in) = fluoride(out). With respect to regulation, na(+) is not transported, but it plays an essential structural role and its presence is essential for fluoride channel function. Its function is as follows. Fluoride-specific ion channel. Important for reducing fluoride concentration in the cell, thus reducing its toxicity. The protein is Fluoride-specific ion channel FluC of Methylobacterium sp. (strain 4-46).